A 283-amino-acid chain; its full sequence is Phosphatidylserine decarboxylase proenzyme (283 aa).

Catalysis depends on charge relay system; for autoendoproteolytic cleavage activity residues aspartate 96, histidine 152, and serine 250. Serine 250 (schiff-base intermediate with substrate; via pyruvic acid; for decarboxylase activity) is an active-site residue. Serine 250 carries the pyruvic acid (Ser); by autocatalysis modification.

It belongs to the phosphatidylserine decarboxylase family. PSD-B subfamily. Prokaryotic type I sub-subfamily. In terms of assembly, heterodimer of a large membrane-associated beta subunit and a small pyruvoyl-containing alpha subunit. Pyruvate serves as cofactor. In terms of processing, is synthesized initially as an inactive proenzyme. Formation of the active enzyme involves a self-maturation process in which the active site pyruvoyl group is generated from an internal serine residue via an autocatalytic post-translational modification. Two non-identical subunits are generated from the proenzyme in this reaction, and the pyruvate is formed at the N-terminus of the alpha chain, which is derived from the carboxyl end of the proenzyme. The autoendoproteolytic cleavage occurs by a canonical serine protease mechanism, in which the side chain hydroxyl group of the serine supplies its oxygen atom to form the C-terminus of the beta chain, while the remainder of the serine residue undergoes an oxidative deamination to produce ammonia and the pyruvoyl prosthetic group on the alpha chain. During this reaction, the Ser that is part of the protease active site of the proenzyme becomes the pyruvoyl prosthetic group, which constitutes an essential element of the active site of the mature decarboxylase.

Its subcellular location is the cell membrane. It carries out the reaction a 1,2-diacyl-sn-glycero-3-phospho-L-serine + H(+) = a 1,2-diacyl-sn-glycero-3-phosphoethanolamine + CO2. The protein operates within phospholipid metabolism; phosphatidylethanolamine biosynthesis; phosphatidylethanolamine from CDP-diacylglycerol: step 2/2. Functionally, catalyzes the formation of phosphatidylethanolamine (PtdEtn) from phosphatidylserine (PtdSer). This is Phosphatidylserine decarboxylase proenzyme from Acinetobacter baumannii (strain AB0057).